A 341-amino-acid polypeptide reads, in one-letter code: Basic membrane protein B (341 aa).

Positions Met-1 to Ser-14 are cleaved as a signal peptide. Cys-15 is lipidated: N-palmitoyl cysteine. Residue Cys-15 is the site of S-diacylglycerol cysteine attachment.

Belongs to the BMP lipoprotein family. Monomer.

Its subcellular location is the cell inner membrane. Its function is as follows. May be part of an ABC-type nucleoside uptake system involved in the purine salvage pathway. The sequence is that of Basic membrane protein B (bmpB) from Borreliella burgdorferi (strain ATCC 35210 / DSM 4680 / CIP 102532 / B31) (Borrelia burgdorferi).